The following is a 449-amino-acid chain: Asparagine--tRNA ligase (449 aa).

It belongs to the class-II aminoacyl-tRNA synthetase family. Homodimer.

The protein resides in the cytoplasm. It carries out the reaction tRNA(Asn) + L-asparagine + ATP = L-asparaginyl-tRNA(Asn) + AMP + diphosphate + H(+). This chain is Asparagine--tRNA ligase, found in Desulfotalea psychrophila (strain LSv54 / DSM 12343).